We begin with the raw amino-acid sequence, 746 residues long: Stromal interaction molecule 2 (746 aa).

An N-terminal signal peptide occupies residues 1–14 (MLLFGLLVAGVADG). Topologically, residues 15–218 (CDLVPRHLRG…RPPHNWMKDF (204 aa)) are extracellular. S28 is modified (phosphoserine). Positions 67–102 (FSLEALQTIHKQMDDDKDGGIEVDESDEFIREDMKY) constitute an EF-hand domain. Positions 80, 82, 84, and 91 each coordinate Ca(2+). Residue N135 is glycosylated (N-linked (GlcNAc...) asparagine). The SAM domain occupies 136–204 (WTLEDTLQWL…QLKALDVVLF (69 aa)). The chain crosses the membrane as a helical span at residues 219-235 (ILTISIVIGVGGCWFAY). Over 236–746 (TQNKTSKEHV…IKSLFKKKSK (511 aa)) the chain is Cytoplasmic. Residues 247–394 (KMMKDLESLQ…EKIKKKRSTV (148 aa)) adopt a coiled-coil conformation. 2 disordered regions span residues 490–562 (PIVP…PDIL) and 592–651 (DTAS…RGSP). Phosphoserine is present on S523. Positions 527–539 (QRAQLPAHAPLAA) are enriched in low complexity. A compositionally biased stretch (basic residues) spans 540 to 549 (HPRHPHHPQH). Phosphoserine occurs at positions 609 and 621. The segment covering 625-637 (ISRDELSLEDSSR) has biased composition (basic and acidic residues). Phosphoserine occurs at positions 640, 650, 661, 665, 680, and 697. Positions 684–746 (LSSGIPVPHP…IKSLFKKKSK (63 aa)) are disordered. Residues 723-732 (DLCHNGEKSK) show a composition bias toward basic and acidic residues. Residues 733-746 (KPSKIKSLFKKKSK) are compositionally biased toward basic residues.

In terms of assembly, oligomer with STIM1. Interacts with ORAI1. Glycosylated. In terms of processing, phosphorylated predominantly on Ser residues.

It localises to the endoplasmic reticulum membrane. Plays a role in mediating store-operated Ca(2+) entry (SOCE), a Ca(2+) influx following depletion of intracellular Ca(2+) stores. Functions as a highly sensitive Ca(2+) sensor in the endoplasmic reticulum which activates both store-operated and store-independent Ca(2+)-influx. Regulates basal cytosolic and endoplasmic reticulum Ca(2+) concentrations. Upon mild variations of the endoplasmic reticulum Ca(2+) concentration, translocates from the endoplasmic reticulum to the plasma membrane where it probably activates the Ca(2+) release-activated Ca(2+) (CRAC) channels ORAI1, ORAI2 and ORAI3. May inhibit STIM1-mediated Ca(2+) influx. The chain is Stromal interaction molecule 2 (Stim2) from Mus musculus (Mouse).